A 248-amino-acid polypeptide reads, in one-letter code: 1-(5-phosphoribosyl)-5-[(5-phosphoribosylamino)methylideneamino] imidazole-4-carboxamide isomerase (248 aa).

Residue D8 is the Proton acceptor of the active site. Residue D127 is the Proton donor of the active site.

Belongs to the HisA/HisF family.

The protein localises to the cytoplasm. It catalyses the reaction 1-(5-phospho-beta-D-ribosyl)-5-[(5-phospho-beta-D-ribosylamino)methylideneamino]imidazole-4-carboxamide = 5-[(5-phospho-1-deoxy-D-ribulos-1-ylimino)methylamino]-1-(5-phospho-beta-D-ribosyl)imidazole-4-carboxamide. It participates in amino-acid biosynthesis; L-histidine biosynthesis; L-histidine from 5-phospho-alpha-D-ribose 1-diphosphate: step 4/9. In Thermotoga neapolitana (strain ATCC 49049 / DSM 4359 / NBRC 107923 / NS-E), this protein is 1-(5-phosphoribosyl)-5-[(5-phosphoribosylamino)methylideneamino] imidazole-4-carboxamide isomerase.